The sequence spans 401 residues: Exodeoxyribonuclease 7 large subunit (401 aa).

It belongs to the XseA family. As to quaternary structure, heterooligomer composed of large and small subunits.

The protein resides in the cytoplasm. It catalyses the reaction Exonucleolytic cleavage in either 5'- to 3'- or 3'- to 5'-direction to yield nucleoside 5'-phosphates.. In terms of biological role, bidirectionally degrades single-stranded DNA into large acid-insoluble oligonucleotides, which are then degraded further into small acid-soluble oligonucleotides. The sequence is that of Exodeoxyribonuclease 7 large subunit from Thermoanaerobacter sp. (strain X514).